Reading from the N-terminus, the 126-residue chain is Ribonuclease P protein component (126 aa).

This sequence belongs to the RnpA family. In terms of assembly, consists of a catalytic RNA component (M1 or rnpB) and a protein subunit.

It carries out the reaction Endonucleolytic cleavage of RNA, removing 5'-extranucleotides from tRNA precursor.. Its function is as follows. RNaseP catalyzes the removal of the 5'-leader sequence from pre-tRNA to produce the mature 5'-terminus. It can also cleave other RNA substrates such as 4.5S RNA. The protein component plays an auxiliary but essential role in vivo by binding to the 5'-leader sequence and broadening the substrate specificity of the ribozyme. The sequence is that of Ribonuclease P protein component from Rhodococcus erythropolis (strain PR4 / NBRC 100887).